A 167-amino-acid chain; its full sequence is Brain ribonuclease (167 aa).

An N-terminal signal peptide occupies residues 1–26 (MALKSLVLLSLLVLVLLLVQVQPSLG). Residues Lys-33 and Arg-36 each contribute to the substrate site. The active-site Proton acceptor is His-38. 4 disulfides stabilise this stretch: Cys-52–Cys-110, Cys-66–Cys-121, Cys-84–Cys-136, and Cys-91–Cys-98. Residue 67 to 71 (KPVNT) participates in substrate binding. Asn-88 carries an N-linked (GlcNAc...) asparagine glycan. Positions 92 and 111 each coordinate substrate. The active-site Proton donor is His-145. Thr-155 carries O-linked (GalNAc...) threonine glycosylation. Ser-159 is a glycosylation site (O-linked (GalNAc...) serine).

This sequence belongs to the pancreatic ribonuclease family.

Its subcellular location is the secreted. The sequence is that of Brain ribonuclease (BRN) from Bos taurus (Bovine).